A 445-amino-acid chain; its full sequence is Probable protein phosphatase 2C 14 (445 aa).

The PPM-type phosphatase domain maps to Gly120–Leu440. Mn(2+) is bound by residues Asp156, Gly157, and Asp318. The disordered stretch occupies residues Asn384 to Pro404. A compositionally biased stretch (polar residues) spans Pro390–Pro404. Asp431 provides a ligand contact to Mn(2+).

This sequence belongs to the PP2C family. It depends on Mg(2+) as a cofactor. The cofactor is Mn(2+).

It catalyses the reaction O-phospho-L-seryl-[protein] + H2O = L-seryl-[protein] + phosphate. The enzyme catalyses O-phospho-L-threonyl-[protein] + H2O = L-threonyl-[protein] + phosphate. In Arabidopsis thaliana (Mouse-ear cress), this protein is Probable protein phosphatase 2C 14.